A 315-amino-acid chain; its full sequence is Protein sprouty homolog 2 (315 aa).

Polar residues predominate over residues M1–L15. Disordered regions lie at residues M1–H39 and N51–F140. Basic and acidic residues predominate over residues D20 to D32. The span at S108 to F140 shows a compositional bias: low complexity. Positions S118–T315 are required for interaction with CAV1. The SPR domain maps to R177–C291. Positions C178–T315 are required for interaction with TESK1.

It belongs to the sprouty family. Forms heterodimers with SPRY1. Forms a tripartite complex containing GAB1, METTL13 and SPRY2. Within the complex interacts with METTL13. Interacts with RAF1. Interacts (via C-terminus) with TESK1 (via C-terminus); the interaction disrupts SPRY2 interaction with GRB2, potentially via disruption of SPRY2 serine dephosphorylation. Interacts with PPP2R1A/PP2A-A and PPP2CA/PP2A-C; the interaction with PPP2CA/PP2A-C is inhibited by interaction with TESK1, possibly by vesicular sequestration of SPRY2. Inhibition of the interaction with the serine/threonine-protein phosphatase 2A (PP2A) holoenzyme results in loss of PP2A-mediated dephosphorylation, resulting in the loss of SPRY2 interaction with GRB2. Interacts with GRB2. Interacts with CBL/C-CBL; the interaction inhibits CBL-mediated ubiquitination of EGFR. Interacts (via C-terminus) with CAV1 (via C-terminus). In terms of processing, cleaved at Pro-144 by the prolyl endopeptidase FAP (seprase) activity (in vitro).

It localises to the cytoplasm. The protein resides in the cytoskeleton. Its subcellular location is the cell projection. It is found in the ruffle membrane. In terms of biological role, antagonist of fibroblast growth factor (FGF) pathways via inhibition of FGF-mediated phosphorylation of ERK1/2. Thereby acts as an antagonist of FGF-induced retinal lens fiber differentiation, may inhibit limb bud outgrowth and may negatively modulate respiratory organogenesis. Inhibits TGFB-induced epithelial-to-mesenchymal transition in retinal lens epithelial cells. Inhibits CBL/C-CBL-mediated EGFR ubiquitination. This is Protein sprouty homolog 2 (SPRY2) from Macaca fascicularis (Crab-eating macaque).